The chain runs to 242 residues: Protein FsrB (242 aa).

Transmembrane regions (helical) follow at residues 29 to 49 (LTVY…SVLF), 52 to 72 (LSET…AGGW), 78 to 95 (WLCR…PFVL), 100 to 120 (VSLP…LFYW), and 160 to 180 (KIAS…LPVT).

Belongs to the AgrB family.

Its subcellular location is the cell membrane. In terms of biological role, may be involved in the proteolytic processing of a quorum sensing system signal molecule precursor required for the regulation of the virulence genes for gelatinase (gelE) and a serine protease (sprE). This chain is Protein FsrB (fsrB), found in Enterococcus faecalis (strain ATCC 47077 / OG1RF).